A 441-amino-acid chain; its full sequence is Probable membrane metalloprotease ARASP2, chloroplastic (441 aa).

The transit peptide at 1–84 (MLLNISSSPI…DFGSLESVLE (84 aa)) directs the protein to the chloroplast. Residue histidine 96 coordinates Zn(2+). The active site involves glutamate 97. Histidine 100 is a Zn(2+) binding site. A helical membrane pass occupies residues 171–191 (VIVVSAGIVANVIFAYAIIFT). The PDZ domain occupies 196–249 (VGLPVQESFPGVLVPDVKSFSAASRDGLLPGDVILAVDGTELSNSGSDSVSKVV). 2 helical membrane passes run 373 to 393 (LAVI…ALIL) and 407 to 427 (VEQG…LFLI).

This sequence belongs to the peptidase M50A family. The cofactor is Zn(2+).

It localises to the plastid. The protein resides in the chloroplast inner membrane. Functionally, metalloprotease essential for chloroplast and plant development. May be involved in regulated intramembrane proteolysis (RIP). The sequence is that of Probable membrane metalloprotease ARASP2, chloroplastic from Arabidopsis thaliana (Mouse-ear cress).